The chain runs to 347 residues: Holliday junction branch migration complex subunit RuvB (347 aa).

The large ATPase domain (RuvB-L) stretch occupies residues 13–195 (NEDAVTSGEV…FGIVEHMQYY (183 aa)). ATP is bound by residues Leu34, Arg35, Gly76, Lys79, Thr80, Thr81, 142 to 144 (EDY), Arg185, Tyr195, and Arg232. Thr80 is a binding site for Mg(2+). The interval 196 to 266 (TIDELEKIVQ…TTEGALKQLQ (71 aa)) is small ATPAse domain (RuvB-S). Residues 269-347 (DEGLDQTDRR…QLGLPVPGDK (79 aa)) form a head domain (RuvB-H) region. DNA is bound at residue Arg329.

Belongs to the RuvB family. In terms of assembly, homohexamer. Forms an RuvA(8)-RuvB(12)-Holliday junction (HJ) complex. HJ DNA is sandwiched between 2 RuvA tetramers; dsDNA enters through RuvA and exits via RuvB. An RuvB hexamer assembles on each DNA strand where it exits the tetramer. Each RuvB hexamer is contacted by two RuvA subunits (via domain III) on 2 adjacent RuvB subunits; this complex drives branch migration. In the full resolvosome a probable DNA-RuvA(4)-RuvB(12)-RuvC(2) complex forms which resolves the HJ.

It is found in the cytoplasm. It catalyses the reaction ATP + H2O = ADP + phosphate + H(+). The RuvA-RuvB-RuvC complex processes Holliday junction (HJ) DNA during genetic recombination and DNA repair, while the RuvA-RuvB complex plays an important role in the rescue of blocked DNA replication forks via replication fork reversal (RFR). RuvA specifically binds to HJ cruciform DNA, conferring on it an open structure. The RuvB hexamer acts as an ATP-dependent pump, pulling dsDNA into and through the RuvAB complex. RuvB forms 2 homohexamers on either side of HJ DNA bound by 1 or 2 RuvA tetramers; 4 subunits per hexamer contact DNA at a time. Coordinated motions by a converter formed by DNA-disengaged RuvB subunits stimulates ATP hydrolysis and nucleotide exchange. Immobilization of the converter enables RuvB to convert the ATP-contained energy into a lever motion, pulling 2 nucleotides of DNA out of the RuvA tetramer per ATP hydrolyzed, thus driving DNA branch migration. The RuvB motors rotate together with the DNA substrate, which together with the progressing nucleotide cycle form the mechanistic basis for DNA recombination by continuous HJ branch migration. Branch migration allows RuvC to scan DNA until it finds its consensus sequence, where it cleaves and resolves cruciform DNA. This Lactobacillus helveticus (strain DPC 4571) protein is Holliday junction branch migration complex subunit RuvB.